The sequence spans 195 residues: Exosome complex component CSL4 (195 aa).

Phosphoserine is present on residues serine 21 and serine 98. The region spanning 66-147 (DVGAIVTCKV…AQSNYLLTTA (82 aa)) is the S1 motif domain.

The protein belongs to the CSL4 family. Component of the RNA exosome core complex (Exo-9), composed of EXOSC1, EXOSC2, EXOSC3, EXOSC4, EXOSC5, EXOSC6, EXOSC7, EXOSC8 and EXOSC9; within the complex interacts with EXOSC6. The catalytically inactive RNA exosome core complex (Exo-9) associates with the catalytic subunit EXOSC10/RRP6. Exo-9 may associate with DIS3 to form the nucleolar exosome complex, or DIS3L to form the cytoplasmic exosome complex. Exo-9 is formed by a hexameric base ring consisting of the heterodimers EXOSC4-EXOSC9, EXOSC5-EXOSC8 and EXOSC6-EXOSC7, and a cap ring consisting of EXOSC1, EXOSC2 and EXOSC3. The RNA exosome complex associates with cofactors C1D/RRP47, MPHOSPH6/MPP6 and MTREX/MTR4. Interacts with DDX60.

It is found in the nucleus. It localises to the nucleolus. The protein resides in the cytoplasm. Functionally, non-catalytic component of the RNA exosome complex which has 3'-&gt;5' exoribonuclease activity and participates in a multitude of cellular RNA processing and degradation events. In the nucleus, the RNA exosome complex is involved in proper maturation of stable RNA species such as rRNA, snRNA and snoRNA, in the elimination of RNA processing by-products and non-coding 'pervasive' transcripts, such as antisense RNA species and promoter-upstream transcripts (PROMPTs), and of mRNAs with processing defects, thereby limiting or excluding their export to the cytoplasm. The RNA exosome may be involved in Ig class switch recombination (CSR) and/or Ig variable region somatic hypermutation (SHM) by targeting AICDA deamination activity to transcribed dsDNA substrates. In the cytoplasm, the RNA exosome complex is involved in general mRNA turnover and specifically degrades inherently unstable mRNAs containing AU-rich elements (AREs) within their 3' untranslated regions, and in RNA surveillance pathways, preventing translation of aberrant mRNAs. It seems to be involved in degradation of histone mRNA. The catalytic inactive RNA exosome core complex of 9 subunits (Exo-9) is proposed to play a pivotal role in the binding and presentation of RNA for ribonucleolysis, and to serve as a scaffold for the association with catalytic subunits and accessory proteins or complexes. EXOSC1 as peripheral part of the Exo-9 complex stabilizes the hexameric ring of RNase PH-domain subunits through contacts with EXOSC6 and EXOSC8. The chain is Exosome complex component CSL4 (EXOSC1) from Homo sapiens (Human).